A 197-amino-acid chain; its full sequence is uncharacterized protein (197 aa).

It belongs to the methyltransferase superfamily.

This is an uncharacterized protein from Mycobacterium bovis (strain ATCC BAA-935 / AF2122/97).